Here is a 116-residue protein sequence, read N- to C-terminus: UPF0499 protein ATEG_06693 (116 aa).

An N-terminal signal peptide occupies residues 1 to 18; it reads MKLTGLLSLALLTTLALA. Intrachain disulfides connect cysteine 32–cysteine 46, cysteine 36–cysteine 49, and cysteine 42–cysteine 54.

This sequence belongs to the UPF0499 family.

Its subcellular location is the secreted. The protein is UPF0499 protein ATEG_06693 of Aspergillus terreus (strain NIH 2624 / FGSC A1156).